The sequence spans 135 residues: Large ribosomal subunit protein uL16c (135 aa).

It belongs to the universal ribosomal protein uL16 family. As to quaternary structure, part of the 50S ribosomal subunit.

Its subcellular location is the plastid. The protein localises to the chloroplast. This is Large ribosomal subunit protein uL16c from Aethionema cordifolium (Lebanon stonecress).